The sequence spans 730 residues: MRHFWLLPAVAGIAGAQCPYLSGEMSFTQEQDNAGDTIEVTEQPIDNTLYVNDTGSYMTTDFGTPISDQTSLKAGPRGPTLLEDFIFRQKLQRFDHERVPERVVHARGAGAYGTFKSYADWSNVTAADFLSANDKETPMFCRFSTVVGFRGSVDTARDVHGHACRFYTDEGNYDIVGINFAPFFIQDAIQFPDLVHAIKPMPNNEIPQAATAHTSAWDFFSQQSTALHSALWLMSGNGIPRSFRHMNGYGVHSFRFVAANGTSKVVRTPWKSQQGVASLVWDEAQAAAGKNSDYHRQDLYNAMPNGHYPKYELQAQIMDEADMLRFGFDLLDPTKLVPEEVVPYTPLGMMELNANPTNYFAEVEQAGFQPGHVVPGIDFTDDPLLQGRLFSYLDTQLTRHGGPNFEQIPVNRPRKPVHNNNRDGFGQQQIPTNNWAYTPNSMSNGYPMQANQTQGHGFFTAPYRYASGHLVRQTSPTFNDHWSQPAMFWNSLIPAEQQMVVNAIVFENSKVNSPHVRKNVVNQLNMVNNNLAVRVARGLGLDEPSPNPTYYTSNKTSNVGTFGKPLLSIEGLQVGFLASNSHPESIKQGQAMAAQFSAAGVDLNIVTEAYADGVNTTYALSDAIDFDALIIADGVQSLFASPALANQMNSTATSTLYPPARPFQILVDSFRYGKPVAAVGSGSVALKNAGIDSSRSGVYTGSSETTEKIAKEVLEGLYTFRFVDRFALDE.

His105 is a catalytic residue. A heme-binding site is contributed by Tyr392. The tract at residues Pro403–Asn433 is disordered.

Belongs to the catalase family. The cofactor is heme.

The enzyme catalyses 2 H2O2 = O2 + 2 H2O. Its function is as follows. Occurs in almost all aerobically respiring organisms and serves to protect cells from the toxic effects of hydrogen peroxide. This is Catalase R (catR) from Aspergillus niger.